The following is a 264-amino-acid chain: Tryptophan synthase alpha chain (264 aa).

Catalysis depends on proton acceptor residues glutamate 49 and aspartate 60.

Belongs to the TrpA family. Tetramer of two alpha and two beta chains.

It carries out the reaction (1S,2R)-1-C-(indol-3-yl)glycerol 3-phosphate + L-serine = D-glyceraldehyde 3-phosphate + L-tryptophan + H2O. Its pathway is amino-acid biosynthesis; L-tryptophan biosynthesis; L-tryptophan from chorismate: step 5/5. Its function is as follows. The alpha subunit is responsible for the aldol cleavage of indoleglycerol phosphate to indole and glyceraldehyde 3-phosphate. This is Tryptophan synthase alpha chain from Picosynechococcus sp. (strain ATCC 27264 / PCC 7002 / PR-6) (Agmenellum quadruplicatum).